A 308-amino-acid chain; its full sequence is GTPase Era (308 aa).

The 168-residue stretch at 14–181 folds into the Era-type G domain; sequence RCGFVALIGA…RRALAAAMPE (168 aa). A G1 region spans residues 22-29; the sequence is GAPNVGKS. 22–29 serves as a coordination point for GTP; sequence GAPNVGKS. A G2 region spans residues 48 to 52; that stretch reads QTTRA. Residues 69 to 72 are G3; it reads DTPG. GTP is bound by residues 69–73 and 131–134; these read DTPGI and NKID. The G4 stretch occupies residues 131-134; sequence NKID. The segment at 160–162 is G5; that stretch reads VAA. Residues 212 to 289 form the KH type-2 domain; that stretch reads LHQELPYQST…HLFLFVKVRD (78 aa).

The protein belongs to the TRAFAC class TrmE-Era-EngA-EngB-Septin-like GTPase superfamily. Era GTPase family. In terms of assembly, monomer.

Its subcellular location is the cytoplasm. The protein resides in the cell inner membrane. Functionally, an essential GTPase that binds both GDP and GTP, with rapid nucleotide exchange. Plays a role in 16S rRNA processing and 30S ribosomal subunit biogenesis and possibly also in cell cycle regulation and energy metabolism. This chain is GTPase Era, found in Afipia carboxidovorans (strain ATCC 49405 / DSM 1227 / KCTC 32145 / OM5) (Oligotropha carboxidovorans).